A 591-amino-acid chain; its full sequence is V-type ATP synthase alpha chain (591 aa).

233 to 240 (GPFGAGKT) serves as a coordination point for ATP.

Belongs to the ATPase alpha/beta chains family.

The catalysed reaction is ATP + H2O + 4 H(+)(in) = ADP + phosphate + 5 H(+)(out). Functionally, produces ATP from ADP in the presence of a proton gradient across the membrane. The V-type alpha chain is a catalytic subunit. This chain is V-type ATP synthase alpha chain, found in Streptococcus pyogenes serotype M1.